A 1306-amino-acid chain; its full sequence is Clustered mitochondria protein homolog (1306 aa).

Over residues 1 to 11 (MAVNNEVNNAA) the composition is skewed to low complexity. The segment at 1 to 47 (MAVNNEVNNAASETPTDVSSSSQKLATEETALTNGADHEEEDGGEAG) is disordered. The segment covering 12–33 (SETPTDVSSSSQKLATEETALT) has biased composition (polar residues). Residues 336–580 (DITRTQENYL…RVTPLDITWM (245 aa)) form the Clu domain. 2 disordered regions span residues 630 to 689 (ERKR…QERI) and 912 to 956 (KQSQ…SPAA). Over residues 656–689 (EPAKSEEPTENGELAKKSESDEAAEPSKPDQERI) the composition is skewed to basic and acidic residues. 3 TPR repeats span residues 1032 to 1065 (ARVY…SERT), 1074 to 1107 (LLNY…WKVV), and 1116 to 1149 (ITTI…CEEV). Positions 1275-1306 (FIEGSDQSNQNKKRPGRSNPKRRGGAAATAGK) are disordered. The segment covering 1285 to 1298 (NKKRPGRSNPKRRG) has biased composition (basic residues).

The protein belongs to the CLU family. As to quaternary structure, may associate with the eukaryotic translation initiation factor 3 (eIF-3) complex.

Its subcellular location is the cytoplasm. Functionally, mRNA-binding protein involved in proper cytoplasmic distribution of mitochondria. In Botryotinia fuckeliana (strain B05.10) (Noble rot fungus), this protein is Clustered mitochondria protein homolog.